The sequence spans 483 residues: Salicylaldehyde dehydrogenase (483 aa).

228–233 (GSTRVG) provides a ligand contact to NAD(+). Residues Glu250 and Cys284 contribute to the active site.

It belongs to the aldehyde dehydrogenase family.

The catalysed reaction is salicylaldehyde + NAD(+) + H2O = salicylate + NADH + 2 H(+). It participates in aromatic compound metabolism; naphthalene degradation. The protein is Salicylaldehyde dehydrogenase (nahF) of Pseudomonas putida (Arthrobacter siderocapsulatus).